A 149-amino-acid polypeptide reads, in one-letter code: Calmodulin (149 aa).

Ala2 carries the post-translational modification N-acetylalanine. EF-hand domains follow at residues 8–43 (EQIA…LGQN), 44–79 (PTEA…KMKD), 81–116 (DTEE…LGEK), and 117–149 (LTDE…MMAK). Ca(2+) is bound by residues Asp21, Asp23, Asp25, Thr27, Glu32, Asp57, Asp59, Asn61, Thr63, Glu68, Asp94, Asp96, Asn98, and Glu105. Position 116 is an N6,N6,N6-trimethyllysine (Lys116). The Ca(2+) site is built by Asp130, Asp132, Asp134, His136, and Glu141.

Belongs to the calmodulin family.

Calmodulin mediates the control of a large number of enzymes, ion channels and other proteins by Ca(2+). Among the enzymes to be stimulated by the calmodulin-Ca(2+) complex are a number of protein kinases and phosphatases. In Stylonychia lemnae (Ciliate), this protein is Calmodulin.